A 305-amino-acid chain; its full sequence is MLKNRSVVSIEDVDIDDLNDLFDLSDSMLKTIEKGGSTDLLRNRIMATLFYEPSTRTRLSFESAMHRLGGSVITVSDVKTSSVAKGETLADTIRMASSYSDIIVIRHPLEGAARLASKFANKPVINAGDGSGQHPTQTILDLYTIKRETGSIDGKTITMVGDLRYGRTIHSLIIALSRFDVRINLVSPQILKLPEYVLTKIGDRSRIMEYDDLSKVIEDTDVLYVTRIQKERFSDQNEYQSVIGSYSVDRDLVSRMKKDAIIMHPLPRIDEIKPEVDELPQARYFKQAYYGVPVRMALIYRILGD.

Carbamoyl phosphate contacts are provided by arginine 56 and threonine 57. Lysine 85 lines the L-aspartate pocket. 3 residues coordinate carbamoyl phosphate: arginine 106, histidine 134, and glutamine 137. L-aspartate is bound by residues arginine 167 and arginine 227. Residues leucine 266 and proline 267 each coordinate carbamoyl phosphate.

Belongs to the aspartate/ornithine carbamoyltransferase superfamily. ATCase family. As to quaternary structure, heterooligomer of catalytic and regulatory chains.

The catalysed reaction is carbamoyl phosphate + L-aspartate = N-carbamoyl-L-aspartate + phosphate + H(+). Its pathway is pyrimidine metabolism; UMP biosynthesis via de novo pathway; (S)-dihydroorotate from bicarbonate: step 2/3. Catalyzes the condensation of carbamoyl phosphate and aspartate to form carbamoyl aspartate and inorganic phosphate, the committed step in the de novo pyrimidine nucleotide biosynthesis pathway. The chain is Aspartate carbamoyltransferase catalytic subunit from Thermoplasma acidophilum (strain ATCC 25905 / DSM 1728 / JCM 9062 / NBRC 15155 / AMRC-C165).